Here is a 127-residue protein sequence, read N- to C-terminus: Large ribosomal subunit protein eL8 (127 aa).

It belongs to the eukaryotic ribosomal protein eL8 family. In terms of assembly, part of the 50S ribosomal subunit. Probably part of the RNase P complex.

It is found in the cytoplasm. Multifunctional RNA-binding protein that recognizes the K-turn motif in ribosomal RNA, the RNA component of RNase P, box H/ACA, box C/D and box C'/D' sRNAs. This chain is Large ribosomal subunit protein eL8, found in Saccharolobus islandicus (strain Y.N.15.51 / Yellowstone #2) (Sulfolobus islandicus).